Consider the following 611-residue polypeptide: Replication protein E1 (611 aa).

Residues 74 to 76 (KRK) carry the Nuclear localization signal motif. Residues Ser80, Ser84, and Ser90 each carry the phosphoserine; by host modification. The short motif at 89-98 (LSPGLAGIRI) is the Nuclear export signal element. Basic and acidic residues predominate over residues 112-128 (FDAGGRDAVRTPRDHEV). Residues 112-154 (FDAGGRDAVRTPRDHEVNSSPEPRSQVQSGSSSRSWEGHLESI) are disordered. A compositionally biased stretch (low complexity) spans 135–146 (RSQVQSGSSSRS). Residues 146 to 313 (SWEGHLESIN…TNVAYNTGEA (168 aa)) form a DNA-binding region region. Residues 412 to 562 (IEPINFVNAL…CPASDTGEPL (151 aa)) form the SF3 helicase domain. 438–445 (GPPNSGKS) contacts ATP. Lys519 participates in a covalent cross-link: Glycyl lysine isopeptide (Lys-Gly) (interchain with G-Cter in SUMO).

It belongs to the papillomaviridae E1 protein family. In terms of assembly, can form hexamers. Interacts with E2 protein; this interaction increases E1 DNA binding specificity. Interacts with host DNA polymerase subunit POLA2. Interacts with host single stranded DNA-binding protein RPA1. Interacts with host TOP1; this interaction stimulates the enzymatic activity of TOP1. In terms of processing, phosphorylated. Sumoylated.

The protein resides in the host nucleus. It carries out the reaction Couples ATP hydrolysis with the unwinding of duplex DNA by translocating in the 3'-5' direction.. The enzyme catalyses ATP + H2O = ADP + phosphate + H(+). Functionally, ATP-dependent DNA 3'-5' helicase required for initiation of viral DNA replication. It forms a complex with the viral E2 protein. The E1-E2 complex binds to the replication origin which contains binding sites for both proteins. During the initial step, a dimer of E1 interacts with a dimer of protein E2 leading to a complex that binds the viral origin of replication with high specificity. Then, a second dimer of E1 displaces the E2 dimer in an ATP-dependent manner to form the E1 tetramer. Following this, two E1 monomers are added to each half of the site, which results in the formation of two E1 trimers on the viral ori. Subsequently, two hexamers will be created. The double hexamer acts as a bi-directional helicase machinery and unwinds the viral DNA and then recruits the host DNA polymerase to start replication. This chain is Replication protein E1, found in Cervus elaphus (Red deer).